The chain runs to 178 residues: Large ribosomal subunit protein uL6 (178 aa).

This sequence belongs to the universal ribosomal protein uL6 family. Part of the 50S ribosomal subunit.

This protein binds to the 23S rRNA, and is important in its secondary structure. It is located near the subunit interface in the base of the L7/L12 stalk, and near the tRNA binding site of the peptidyltransferase center. The chain is Large ribosomal subunit protein uL6 from Nitratiruptor sp. (strain SB155-2).